A 693-amino-acid chain; its full sequence is Homoaconitase, mitochondrial (693 aa).

Residues 1–17 constitute a mitochondrion transit peptide; that stretch reads MFRVQRLRMFSTSRALY. [4Fe-4S] cluster-binding residues include C338, C405, and C408.

Belongs to the aconitase/IPM isomerase family. It depends on [4Fe-4S] cluster as a cofactor.

It is found in the mitochondrion. The enzyme catalyses (2R,3S)-homoisocitrate = cis-homoaconitate + H2O. It functions in the pathway amino-acid biosynthesis; L-lysine biosynthesis via AAA pathway; L-alpha-aminoadipate from 2-oxoglutarate: step 3/5. Its function is as follows. Catalyzes the reversible hydration of cis-homoaconitate to (2R,3S)-homoisocitrate, a step in the alpha-aminoadipate pathway for lysine biosynthesis. The polypeptide is Homoaconitase, mitochondrial (LYS4) (Kluyveromyces lactis (strain ATCC 8585 / CBS 2359 / DSM 70799 / NBRC 1267 / NRRL Y-1140 / WM37) (Yeast)).